The chain runs to 87 residues: U3-theraphotoxin-Cg1c (87 aa).

The N-terminal stretch at 1 to 23 (MRTFTLIAILTCAVLVIFHVSAA) is a signal peptide. Residues 24–51 (EELEAQDVIQPEDIFTGVATLEEDRIFE) constitute a propeptide that is removed on maturation. 3 cysteine pairs are disulfide-bonded: cysteine 52–cysteine 65, cysteine 56–cysteine 79, and cysteine 73–cysteine 84.

This sequence belongs to the neurotoxin 12 (Hwtx-2) family. 03 (juruin) subfamily. Expressed by the venom gland.

Its subcellular location is the secreted. Functionally, probable ion channel inhibitor. This chain is U3-theraphotoxin-Cg1c, found in Chilobrachys guangxiensis (Chinese earth tiger tarantula).